The chain runs to 159 residues: Cyclic pyranopterin monophosphate synthase (159 aa).

Residues 75-77 (LCH) and 113-114 (ME) contribute to the substrate site. The active site involves D128.

Belongs to the MoaC family. As to quaternary structure, homohexamer; trimer of dimers.

It catalyses the reaction (8S)-3',8-cyclo-7,8-dihydroguanosine 5'-triphosphate = cyclic pyranopterin phosphate + diphosphate. The protein operates within cofactor biosynthesis; molybdopterin biosynthesis. Functionally, catalyzes the conversion of (8S)-3',8-cyclo-7,8-dihydroguanosine 5'-triphosphate to cyclic pyranopterin monophosphate (cPMP). The sequence is that of Cyclic pyranopterin monophosphate synthase from Yersinia pseudotuberculosis serotype IB (strain PB1/+).